We begin with the raw amino-acid sequence, 247 residues long: Uridylate kinase (247 aa).

18-21 (KLSG) provides a ligand contact to ATP. Gly-60 is a binding site for UMP. The ATP site is built by Gly-61 and Arg-65. Residues Asp-80 and 141–148 (TGNPFFTT) contribute to the UMP site. 3 residues coordinate ATP: Thr-168, Tyr-174, and Asp-177.

Belongs to the UMP kinase family. In terms of assembly, homohexamer.

The protein localises to the cytoplasm. The enzyme catalyses UMP + ATP = UDP + ADP. It participates in pyrimidine metabolism; CTP biosynthesis via de novo pathway; UDP from UMP (UMPK route): step 1/1. With respect to regulation, inhibited by UTP. Its function is as follows. Catalyzes the reversible phosphorylation of UMP to UDP. This is Uridylate kinase from Pseudomonas putida (strain ATCC 47054 / DSM 6125 / CFBP 8728 / NCIMB 11950 / KT2440).